The chain runs to 505 residues: Maturase K (505 aa).

Belongs to the intron maturase 2 family. MatK subfamily.

Its subcellular location is the plastid. It localises to the chloroplast. Its function is as follows. Usually encoded in the trnK tRNA gene intron. Probably assists in splicing its own and other chloroplast group II introns. This Apocynum androsaemifolium (Spreading dogbane) protein is Maturase K.